The chain runs to 336 residues: DNA-directed RNA polymerase subunit alpha (336 aa).

Residues 1 to 232 (MIQKNWQELI…DQLSVFVNFD (232 aa)) are alpha N-terminal domain (alpha-NTD). The tract at residues 248–336 (FNPALLKKVD…DLAKRYEDQY (89 aa)) is alpha C-terminal domain (alpha-CTD).

It belongs to the RNA polymerase alpha chain family. In terms of assembly, homodimer. The RNAP catalytic core consists of 2 alpha, 1 beta, 1 beta' and 1 omega subunit. When a sigma factor is associated with the core the holoenzyme is formed, which can initiate transcription.

The catalysed reaction is RNA(n) + a ribonucleoside 5'-triphosphate = RNA(n+1) + diphosphate. DNA-dependent RNA polymerase catalyzes the transcription of DNA into RNA using the four ribonucleoside triphosphates as substrates. This is DNA-directed RNA polymerase subunit alpha from Sinorhizobium medicae (strain WSM419) (Ensifer medicae).